The chain runs to 617 residues: Proline--tRNA ligase (617 aa).

This sequence belongs to the class-II aminoacyl-tRNA synthetase family. ProS type 1 subfamily. Homodimer.

It localises to the cytoplasm. The catalysed reaction is tRNA(Pro) + L-proline + ATP = L-prolyl-tRNA(Pro) + AMP + diphosphate. Catalyzes the attachment of proline to tRNA(Pro) in a two-step reaction: proline is first activated by ATP to form Pro-AMP and then transferred to the acceptor end of tRNA(Pro). As ProRS can inadvertently accommodate and process non-cognate amino acids such as alanine and cysteine, to avoid such errors it has two additional distinct editing activities against alanine. One activity is designated as 'pretransfer' editing and involves the tRNA(Pro)-independent hydrolysis of activated Ala-AMP. The other activity is designated 'posttransfer' editing and involves deacylation of mischarged Ala-tRNA(Pro). The misacylated Cys-tRNA(Pro) is not edited by ProRS. The protein is Proline--tRNA ligase of Streptococcus agalactiae serotype III (strain NEM316).